The following is a 436-amino-acid chain: ATP-dependent 6-phosphofructokinase (436 aa).

ATP-binding positions include glycine 90, 155–156, and 180–183; these read RG and GDGT. Aspartate 181 lines the Mg(2+) pocket. Residues 209-211, 254-256, glutamate 307, and 362-365 contribute to the substrate site; these read TID, MGR, and YMIR. Aspartate 211 functions as the Proton acceptor in the catalytic mechanism.

The protein belongs to the phosphofructokinase type A (PFKA) family. PPi-dependent PFK group II subfamily. Atypical ATP-dependent clade 'X' sub-subfamily. Homodimer. Aggregates to a homotetramer after activation by ATP. Mg(2+) is required as a cofactor.

The protein resides in the cytoplasm. The catalysed reaction is beta-D-fructose 6-phosphate + ATP = beta-D-fructose 1,6-bisphosphate + ADP + H(+). It functions in the pathway carbohydrate degradation; glycolysis; D-glyceraldehyde 3-phosphate and glycerone phosphate from D-glucose: step 3/4. Its activity is regulated as follows. Activated by nucleoside triphosphates. Inhibited by phosphoenolpyruvate. EDTA and biphosphonates play the role of inhibitors of kinase activity. Catalyzes the phosphorylation of D-fructose 6-phosphate to fructose 1,6-bisphosphate by ATP, the first committing step of glycolysis. The protein is ATP-dependent 6-phosphofructokinase (PPi-PFK) of Entamoeba histolytica (strain ATCC 30459 / HM-1:IMSS / ABRM).